The following is a 310-amino-acid chain: Tagatose-6-phosphate kinase (310 aa).

This sequence belongs to the carbohydrate kinase PfkB family. LacC subfamily.

The enzyme catalyses D-tagatofuranose 6-phosphate + ATP = D-tagatofuranose 1,6-bisphosphate + ADP + H(+). It functions in the pathway carbohydrate metabolism; D-tagatose 6-phosphate degradation; D-glyceraldehyde 3-phosphate and glycerone phosphate from D-tagatose 6-phosphate: step 1/2. The sequence is that of Tagatose-6-phosphate kinase from Staphylococcus aureus (strain USA300 / TCH1516).